We begin with the raw amino-acid sequence, 119 residues long: Urease subunit beta (119 aa).

This sequence belongs to the urease beta subunit family. As to quaternary structure, heterotrimer of UreA (gamma), UreB (beta) and UreC (alpha) subunits. Three heterotrimers associate to form the active enzyme.

The protein resides in the cytoplasm. The enzyme catalyses urea + 2 H2O + H(+) = hydrogencarbonate + 2 NH4(+). Its pathway is nitrogen metabolism; urea degradation; CO(2) and NH(3) from urea (urease route): step 1/1. This Tolumonas auensis (strain DSM 9187 / NBRC 110442 / TA 4) protein is Urease subunit beta.